The following is a 310-amino-acid chain: Putative S-adenosyl-L-methionine-dependent methyltransferase MUL_4763 (310 aa).

Residues D137 and 166 to 167 (DL) contribute to the S-adenosyl-L-methionine site.

This sequence belongs to the UPF0677 family.

In terms of biological role, exhibits S-adenosyl-L-methionine-dependent methyltransferase activity. The protein is Putative S-adenosyl-L-methionine-dependent methyltransferase MUL_4763 of Mycobacterium ulcerans (strain Agy99).